The primary structure comprises 101 residues: Phosphoprotein OPG062 (101 aa).

Positions 51-73 (PSSPACERRPSSPSRCERMNNPG) are disordered. Ser-53 and Ser-62 each carry phosphoserine. Over residues 56–68 (CERRPSSPSRCER) the composition is skewed to basic and acidic residues.

This sequence belongs to the orthopoxvirus OPG062 family. In terms of assembly, self-associates to form high molecular-weight forms. Interacts with protein OPG157. Interacts with host RICTOR and RPTOR; these interactions disrupt the mTORC1 and mTORC2 crosstalk. In terms of processing, phosphorylated on two serines. While these phosphorylations do not play a role in virion assembly; they are essential for the interaction with host RICTOR and RPTOR.

The protein resides in the virion. Plays an essential role in virion assembly and morphogenesis. Also plays a role in the inhibition of host immune response by dysregulating mTOR. Sequesters host RICTOR and RPTOR, thereby disrupting mTORC1 and mTORC2 crosstalk. In turn, blocks the host antiviral response in part through mTOR-dependent degradation of cGAS, the primary poxvirus sensor. The polypeptide is Phosphoprotein OPG062 (OPG062) (Homo sapiens (Human)).